The sequence spans 974 residues: Alpha-1,4 glucan phosphorylase L-2 isozyme, chloroplastic/amyloplastic (974 aa).

The transit peptide at 1–81 (MATFAVSGLN…LDVFQPDSTS (81 aa)) directs the protein to the chloroplast. Positions 509–551 (ADVEKAADEEQEEEGKDDSKDEETEAVKAETTNEEEETEVKKV) are disordered. A compositionally biased stretch (acidic residues) spans 517 to 532 (EEQEEEGKDDSKDEET). Lysine 820 is modified (N6-(pyridoxal phosphate)lysine).

Belongs to the glycogen phosphorylase family. Pyridoxal 5'-phosphate serves as cofactor. In terms of tissue distribution, leaves.

It is found in the plastid. The protein resides in the chloroplast. The protein localises to the amyloplast. The catalysed reaction is [(1-&gt;4)-alpha-D-glucosyl](n) + phosphate = [(1-&gt;4)-alpha-D-glucosyl](n-1) + alpha-D-glucose 1-phosphate. Phosphorylase is an important allosteric enzyme in carbohydrate metabolism. Enzymes from different sources differ in their regulatory mechanisms and in their natural substrates. However, all known phosphorylases share catalytic and structural properties. The polypeptide is Alpha-1,4 glucan phosphorylase L-2 isozyme, chloroplastic/amyloplastic (STP-1) (Solanum tuberosum (Potato)).